Consider the following 410-residue polypeptide: Metal tolerance protein 3 (410 aa).

Residues 1 to 58 (MDGDDRRTPLLGGEGGSTRPPSLRRRDSARSLRSTFLSRLPDKVRGGGDPERPAADVD) are disordered. The Cytoplasmic segment spans residues 1–114 (MDGDDRRTPL…EDKEQKQSES (114 aa)). Positions 40–58 (LPDKVRGGGDPERPAADVD) are enriched in basic and acidic residues. A helical membrane pass occupies residues 115–135 (AMKISNYANIILLVFKVYATI). At 136 to 140 (KTGSM) the chain is on the vacuolar side. Residues 141–161 (AIAASTLDSLLDFLAGGILYF) traverse the membrane as a helical segment. The Cytoplasmic segment spans residues 162-184 (THLTMKSVNIYKYPIGKLRVQPV). The chain crosses the membrane as a helical span at residues 185-205 (GIIVFAAIMATLGFQVLIQAI). Over 206-221 (EQLVENKAGEKMTPEQ) the chain is Vacuolar. Residues 222–242 (LIWLYSIMLSATVVKLALYIY) form a helical membrane-spanning segment. Topologically, residues 243–258 (CRSSGNSIVQAYAKDH) are cytoplasmic. A helical membrane pass occupies residues 259–275 (YFDVVTNVVGLVAAVLG). At 276-284 (DKFFWWIDP) the chain is on the vacuolar side. A helical transmembrane segment spans residues 285–303 (VGAVLLAVYTIVNWSGTVY). Over 304–410 (ENAVTLVGQC…VRSRLPSTEP (107 aa)) the chain is Cytoplasmic.

Belongs to the cation diffusion facilitator (CDF) transporter (TC 2.A.4) family. SLC30A subfamily.

It is found in the vacuole membrane. In terms of biological role, involved in sequestration of excess metal in the cytoplasm into vacuoles to maintain metal homeostasis. This chain is Metal tolerance protein 3 (MTP3), found in Oryza sativa subsp. japonica (Rice).